The primary structure comprises 144 residues: 3-dehydroquinate dehydratase (144 aa).

Residue Tyr24 is the Proton acceptor of the active site. Substrate contacts are provided by Asn73, His79, and Asp86. His99 (proton donor) is an active-site residue. Substrate-binding positions include 100-101 and Arg110; that span reads LS.

Belongs to the type-II 3-dehydroquinase family. Homododecamer.

The enzyme catalyses 3-dehydroquinate = 3-dehydroshikimate + H2O. It functions in the pathway metabolic intermediate biosynthesis; chorismate biosynthesis; chorismate from D-erythrose 4-phosphate and phosphoenolpyruvate: step 3/7. In terms of biological role, catalyzes a trans-dehydration via an enolate intermediate. This chain is 3-dehydroquinate dehydratase, found in Shewanella putrefaciens (strain CN-32 / ATCC BAA-453).